We begin with the raw amino-acid sequence, 394 residues long: Major outer membrane porin, serovar B (394 aa).

Positions methionine 1 to alanine 22 are cleaved as a signal peptide.

Belongs to the chlamydial porin (CP) (TC 1.B.2) family. As to quaternary structure, part of a disulfide cross-linked outer membrane complex (COMC) composed of the major outer membrane porin (MOMP), the small cysteine-rich protein (OmcA) and the large cysteine-rich periplasmic protein (OmcB).

It localises to the cell outer membrane. Functionally, in elementary bodies (EBs, the infectious stage, which is able to survive outside the host cell) provides the structural integrity of the outer envelope through disulfide cross-links with the small cysteine-rich protein and the large cysteine-rich periplasmic protein. It has been described in publications as the Sarkosyl-insoluble COMC (Chlamydia outer membrane complex), and serves as the functional equivalent of peptidoglycan. Its function is as follows. Permits diffusion of specific solutes through the outer membrane. The polypeptide is Major outer membrane porin, serovar B (ompA) (Chlamydia trachomatis).